The primary structure comprises 464 residues: Argininosuccinate lyase (464 aa).

Belongs to the lyase 1 family. Argininosuccinate lyase subfamily.

It is found in the cytoplasm. The enzyme catalyses 2-(N(omega)-L-arginino)succinate = fumarate + L-arginine. It functions in the pathway amino-acid biosynthesis; L-arginine biosynthesis; L-arginine from L-ornithine and carbamoyl phosphate: step 3/3. This chain is Argininosuccinate lyase, found in Ectopseudomonas mendocina (strain ymp) (Pseudomonas mendocina).